We begin with the raw amino-acid sequence, 218 residues long: UPF0319 protein swp_2242 (218 aa).

A signal peptide spans 1-21; that stretch reads MRLSQSVLTALLICVNSAAFA.

The protein belongs to the UPF0319 family.

The chain is UPF0319 protein swp_2242 from Shewanella piezotolerans (strain WP3 / JCM 13877).